Here is a 361-residue protein sequence, read N- to C-terminus: Tyrosine--tRNA ligase (361 aa).

Residues tyrosine 36, tyrosine 162, glutamine 166, aspartate 169, and glutamine 184 each coordinate L-tyrosine. Residues 236-240 (KMSKS) carry the 'KMSKS' region motif. Lysine 239 contributes to the ATP binding site.

This sequence belongs to the class-I aminoacyl-tRNA synthetase family. TyrS type 4 subfamily. In terms of assembly, homodimer.

Its subcellular location is the cytoplasm. It carries out the reaction tRNA(Tyr) + L-tyrosine + ATP = L-tyrosyl-tRNA(Tyr) + AMP + diphosphate + H(+). Catalyzes the attachment of tyrosine to tRNA(Tyr) in a two-step reaction: tyrosine is first activated by ATP to form Tyr-AMP and then transferred to the acceptor end of tRNA(Tyr). The chain is Tyrosine--tRNA ligase from Saccharolobus islandicus (strain M.14.25 / Kamchatka #1) (Sulfolobus islandicus).